The sequence spans 296 residues: Ribosomal protein L11 methyltransferase (296 aa).

The S-adenosyl-L-methionine site is built by T139, G163, D185, and N232.

It belongs to the methyltransferase superfamily. PrmA family.

Its subcellular location is the cytoplasm. It catalyses the reaction L-lysyl-[protein] + 3 S-adenosyl-L-methionine = N(6),N(6),N(6)-trimethyl-L-lysyl-[protein] + 3 S-adenosyl-L-homocysteine + 3 H(+). Its function is as follows. Methylates ribosomal protein L11. This is Ribosomal protein L11 methyltransferase from Picosynechococcus sp. (strain ATCC 27264 / PCC 7002 / PR-6) (Agmenellum quadruplicatum).